Reading from the N-terminus, the 591-residue chain is Heterogeneous nuclear ribonucleoprotein L-like (591 aa).

The tract at residues 1–120 (MSSSSSSSPK…STEGGGSHHK (120 aa)) is disordered. The span at 20–31 (FESQAKRLKTEE) shows a compositional bias: basic and acidic residues. A Glycyl lysine isopeptide (Lys-Gly) (interchain with G-Cter in SUMO2) cross-link involves residue Lys28. Ser37 carries the post-translational modification Phosphoserine. Thr48 carries the post-translational modification Phosphothreonine. Positions 57 to 73 (SGGGDGGDGDGGSGGGG) are enriched in gly residues. Positions 74 to 91 (DGEEGEGGEEGDEGDGDE) are enriched in acidic residues. A compositionally biased stretch (gly residues) spans 92-105 (GGSGGDEGGSGGGP). Phosphoserine is present on residues Ser107, Ser117, and Ser124. RRM domains follow at residues 125–199 (PVVH…YSTS), 215–293 (NKVL…YARP), and 384–458 (SVVM…VSKQ). Lys540 is covalently cross-linked (Glycyl lysine isopeptide (Lys-Gly) (interchain with G-Cter in SUMO2)).

In terms of assembly, interacts with HNRNPL.

RNA-binding protein that functions as a regulator of alternative splicing for multiple target mRNAs, including PTPRC/CD45 and STAT5A. Required for alternative splicing of PTPRC. The polypeptide is Heterogeneous nuclear ribonucleoprotein L-like (Hnrnpll) (Mus musculus (Mouse)).